The primary structure comprises 260 residues: Scytalidopepsin B (260 aa).

Residues 1-20 (MKFTTAAVLSALVSAEIAFA) form the signal peptide. Residues 21 to 54 (APGGNGFARRQARRQARAAGLKASPFRQVNAKEA) constitute a propeptide that is removed on maturation. An intrachain disulfide couples Cys101 to Cys181. The active-site Proton acceptor is the Glu190. 2 disulfide bridges follow: Cys195–Cys219 and Cys248–Cys257.

The protein belongs to the peptidase G1 family. As to quaternary structure, monomer.

The enzyme catalyses Hydrolysis of proteins with broad specificity, cleaving 24-Phe-|-Phe-25, but not 15-Leu-|-Tyr-16 and 25-Phe-|-Tyr-26 in the B chain of insulin.. The sequence is that of Scytalidopepsin B from Scytalidium lignicola (Hyphomycete).